The primary structure comprises 255 residues: Bouquet formation protein 3 (255 aa).

8 helical membrane-spanning segments follow: residues 13-33 (IKVSIYLFLHTLTYGLLNYHL), 48-68 (IPYWMSYLSIIMHVGQSLLLQ), 72-94 (LGYGWLLLTKYPVYVLLSTYYLT), 99-116 (IAWAFIIDAISLLVARCF), 132-152 (YSVSFLFTIMASVLISVLNYI), 172-192 (SLVAPPLPLQYLAHVPIGYVI), 205-225 (SLFLMIFLTLWNCFIPYSILF), and 235-255 (VVGAYLSQIWIITFICWALSL).

The protein localises to the endoplasmic reticulum membrane. The protein resides in the nucleus inner membrane. Its function is as follows. Connects telomeres to the nuclear envelop (NE) during both vegetative growth and meiosis. This connection ensures clustering of telomeres to the spindle pole body (SPB) when cells enter meiotic prophase. The polypeptide is Bouquet formation protein 3 (bqt3) (Schizosaccharomyces pombe (strain 972 / ATCC 24843) (Fission yeast)).